Reading from the N-terminus, the 335-residue chain is tRNA pseudouridine synthase D (335 aa).

The Nucleophile role is filled by Asp-77. The region spanning 152–308 is the TRUD domain; it reads GFPNYFTEQR…AQNLNWQFEP (157 aa).

This sequence belongs to the pseudouridine synthase TruD family.

It carries out the reaction uridine(13) in tRNA = pseudouridine(13) in tRNA. Responsible for synthesis of pseudouridine from uracil-13 in transfer RNAs. This chain is tRNA pseudouridine synthase D, found in Actinobacillus succinogenes (strain ATCC 55618 / DSM 22257 / CCUG 43843 / 130Z).